Consider the following 469-residue polypeptide: Siroheme synthase (469 aa).

The precorrin-2 dehydrogenase /sirohydrochlorin ferrochelatase stretch occupies residues 1–211; sequence MSTQLQTWDF…GRTDKARAML (211 aa). NAD(+) is bound by residues 29–30 and 50–51; these read EQ and DP. Phosphoserine is present on Ser136. Residues 227–469 are uroporphyrinogen-III C-methyltransferase; that stretch reads GEVYLVGAGP…TLRDRLRWMD (243 aa). Pro236 is a binding site for S-adenosyl-L-methionine. Catalysis depends on Asp259, which acts as the Proton acceptor. Residue Lys281 is the Proton donor of the active site. Residues 312–314, Ile317, 342–343, Met394, and Gly423 contribute to the S-adenosyl-L-methionine site; these read GGD and TA.

It in the N-terminal section; belongs to the precorrin-2 dehydrogenase / sirohydrochlorin ferrochelatase family. The protein in the C-terminal section; belongs to the precorrin methyltransferase family.

The enzyme catalyses uroporphyrinogen III + 2 S-adenosyl-L-methionine = precorrin-2 + 2 S-adenosyl-L-homocysteine + H(+). It catalyses the reaction precorrin-2 + NAD(+) = sirohydrochlorin + NADH + 2 H(+). The catalysed reaction is siroheme + 2 H(+) = sirohydrochlorin + Fe(2+). Its pathway is cofactor biosynthesis; adenosylcobalamin biosynthesis; precorrin-2 from uroporphyrinogen III: step 1/1. It functions in the pathway cofactor biosynthesis; adenosylcobalamin biosynthesis; sirohydrochlorin from precorrin-2: step 1/1. It participates in porphyrin-containing compound metabolism; siroheme biosynthesis; precorrin-2 from uroporphyrinogen III: step 1/1. The protein operates within porphyrin-containing compound metabolism; siroheme biosynthesis; siroheme from sirohydrochlorin: step 1/1. Its pathway is porphyrin-containing compound metabolism; siroheme biosynthesis; sirohydrochlorin from precorrin-2: step 1/1. Multifunctional enzyme that catalyzes the SAM-dependent methylations of uroporphyrinogen III at position C-2 and C-7 to form precorrin-2 via precorrin-1. Then it catalyzes the NAD-dependent ring dehydrogenation of precorrin-2 to yield sirohydrochlorin. Finally, it catalyzes the ferrochelation of sirohydrochlorin to yield siroheme. In Hahella chejuensis (strain KCTC 2396), this protein is Siroheme synthase.